The primary structure comprises 349 residues: tRNA pseudouridine synthase D (349 aa).

The interval 1–22 (MTDAPLVTAELPGSGGSLRRSP) is disordered. D78 (nucleophile) is an active-site residue. The TRUD domain maps to 150–304 (GLPNLFGPQR…AEGTRRAARL (155 aa)).

The protein belongs to the pseudouridine synthase TruD family.

The catalysed reaction is uridine(13) in tRNA = pseudouridine(13) in tRNA. Its function is as follows. Responsible for synthesis of pseudouridine from uracil-13 in transfer RNAs. This chain is tRNA pseudouridine synthase D, found in Anaeromyxobacter sp. (strain Fw109-5).